We begin with the raw amino-acid sequence, 112 residues long: UPF0342 protein SSU05_1260 (112 aa).

This sequence belongs to the UPF0342 family.

The sequence is that of UPF0342 protein SSU05_1260 from Streptococcus suis (strain 05ZYH33).